We begin with the raw amino-acid sequence, 484 residues long: L-amino-acid oxidase (484 aa).

A disulfide bridge links cysteine 8 with cysteine 171. FAD contacts are provided by residues 41–42 (MS), 61–62 (EA), and arginine 69. A Zn(2+)-binding site is contributed by histidine 73. 85–88 (GPMR) is an FAD binding site. Arginine 88 contacts substrate. Asparagine 170 is a glycosylation site (N-linked (GlcNAc...) asparagine). Histidine 221 lines the substrate pocket. FAD is bound at residue valine 259. Glutamate 277 provides a ligand contact to Zn(2+). An intrachain disulfide couples cysteine 329 to cysteine 410. Substrate is bound at residue tyrosine 370. Residues glutamate 455 and 462 to 467 (GWIDST) each bind FAD. 462–463 (GW) provides a ligand contact to substrate.

The protein belongs to the flavin monoamine oxidase family. FIG1 subfamily. Homodimer; non-covalently linked. FAD serves as cofactor. In terms of tissue distribution, expressed by the venom gland.

It is found in the secreted. The catalysed reaction is an L-alpha-amino acid + O2 + H2O = a 2-oxocarboxylate + H2O2 + NH4(+). Its function is as follows. Catalyzes an oxidative deamination of predominantly hydrophobic and aromatic L-amino acids, thus producing hydrogen peroxide that may contribute to the diverse toxic effects of this enzyme. Exhibits diverse biological activities, such as hemorrhage, hemolysis, edema, apoptosis of vascular endothelial cells or tumor cell lines, antibacterial and antiparasitic activities, as well as regulation of platelet aggregation. Effects of snake L-amino oxidases on platelets are controversial, since they either induce aggregation or inhibit agonist-induced aggregation. These different effects are probably due to different experimental conditions. This is L-amino-acid oxidase from Vipera ammodytes ammodytes (Western sand viper).